Reading from the N-terminus, the 289-residue chain is 4-hydroxybenzoate octaprenyltransferase (289 aa).

Helical transmembrane passes span 23–43 (IGALLLLWPTLWALWVATPGV), 46–66 (LWILAVFVAGVWLMRAAGCVV), 99–119 (LFVVLVALSFLLVLTLNTMTI), 141–161 (LPQVVLGAAFGWSIPMAFAAV), 163–183 (ESVPLSCWLMFLANILWAVAY), 213–233 (LIIGILQIAVLALMALIGWLN), 234–254 (GLGWGYYWSVLVAGALFVYQQ), and 268–288 (AFMNNNYVGLVLFLGLAMSYV).

It belongs to the UbiA prenyltransferase family. Mg(2+) is required as a cofactor.

It localises to the cell inner membrane. It carries out the reaction all-trans-octaprenyl diphosphate + 4-hydroxybenzoate = 4-hydroxy-3-(all-trans-octaprenyl)benzoate + diphosphate. It functions in the pathway cofactor biosynthesis; ubiquinone biosynthesis. In terms of biological role, catalyzes the prenylation of para-hydroxybenzoate (PHB) with an all-trans polyprenyl group. Mediates the second step in the final reaction sequence of ubiquinone-8 (UQ-8) biosynthesis, which is the condensation of the polyisoprenoid side chain with PHB, generating the first membrane-bound Q intermediate 3-octaprenyl-4-hydroxybenzoate. This Citrobacter koseri (strain ATCC BAA-895 / CDC 4225-83 / SGSC4696) protein is 4-hydroxybenzoate octaprenyltransferase.